The primary structure comprises 142 residues: Transcriptional regulator MraZ (142 aa).

2 SpoVT-AbrB domains span residues 5–51 (ASSL…PRPE) and 77–120 (AMDV…DKAT).

The protein belongs to the MraZ family. In terms of assembly, forms oligomers.

The protein localises to the cytoplasm. It is found in the nucleoid. The polypeptide is Transcriptional regulator MraZ (Variovorax paradoxus (strain S110)).